Consider the following 251-residue polypeptide: MQCAVLLVLLGVVAASPIIPEAARALYYNDGMFEGDIKLRAGRQPARVGAAILGDEYLWSGGVIPYTFAGVSGADQSAILSGMQELEEKTCIRFVPRTTESDYVEIFTSGSGCWSYVGRISGAQQVSLQANGCVYHGTIIHELMHAIGFYHEHTRMDRDNYVTINYQNVDPSMTSNFDIDTYSRYVGEDYQYYSIMHYGKYSFSIQWGVLETIVPLQNGIDLTDPYDKAHMLQTDANQINNLYTNECSLRH.

The first 15 residues, 1-15 (MQCAVLLVLLGVVAA), serve as a signal peptide directing secretion. A propeptide spans 16-49 (SPIIPEAARALYYNDGMFEGDIKLRAGRQPARVG) (activation peptide). Positions 50–248 (AAILGDEYLW…INNLYTNECS (199 aa)) constitute a Peptidase M12A domain. Cystine bridges form between cysteine 91-cysteine 247 and cysteine 113-cysteine 133. Histidine 141 is a Zn(2+) binding site. Residue glutamate 142 is part of the active site. Residues histidine 145 and histidine 151 each contribute to the Zn(2+) site. Positions 250-251 (RH) are excised as a propeptide.

As to quaternary structure, monomer. It depends on Zn(2+) as a cofactor.

It carries out the reaction Hydrolysis of peptide bonds in substrates containing five or more amino acids, preferentially with Ala in P1', and Pro in P2'.. Functionally, metalloprotease. This protease prefers to cleave in front of small aliphatic residues (P1'). The presence of Lys or Arg in the P1 and P2 position yields high-turnover substrates. In the P3 position the enzyme prefers Pro &gt; Val &gt; Leu &gt; Ala &gt; Gly. The sequence is that of Astacin from Astacus astacus (Noble crayfish).